A 203-amino-acid polypeptide reads, in one-letter code: uncharacterized protein (203 aa).

The protein belongs to the mimivirus L332/L333/L334 family.

This is an uncharacterized protein from Acanthamoeba polyphaga mimivirus (APMV).